Consider the following 275-residue polypeptide: Tryptophan synthase alpha chain (275 aa).

Active-site proton acceptor residues include E49 and D60.

It belongs to the TrpA family. Tetramer of two alpha and two beta chains.

It catalyses the reaction (1S,2R)-1-C-(indol-3-yl)glycerol 3-phosphate + L-serine = D-glyceraldehyde 3-phosphate + L-tryptophan + H2O. It participates in amino-acid biosynthesis; L-tryptophan biosynthesis; L-tryptophan from chorismate: step 5/5. Its function is as follows. The alpha subunit is responsible for the aldol cleavage of indoleglycerol phosphate to indole and glyceraldehyde 3-phosphate. In Psychrobacter sp. (strain PRwf-1), this protein is Tryptophan synthase alpha chain.